Consider the following 430-residue polypeptide: Serine--tRNA ligase (430 aa).

237–239 (TAE) lines the L-serine pocket. 268–270 (RAE) contacts ATP. Position 291 (E291) interacts with L-serine. 355 to 358 (EVSS) is a binding site for ATP. S391 is an L-serine binding site.

Belongs to the class-II aminoacyl-tRNA synthetase family. Type-1 seryl-tRNA synthetase subfamily. In terms of assembly, homodimer. The tRNA molecule binds across the dimer.

Its subcellular location is the cytoplasm. It catalyses the reaction tRNA(Ser) + L-serine + ATP = L-seryl-tRNA(Ser) + AMP + diphosphate + H(+). The catalysed reaction is tRNA(Sec) + L-serine + ATP = L-seryl-tRNA(Sec) + AMP + diphosphate + H(+). The protein operates within aminoacyl-tRNA biosynthesis; selenocysteinyl-tRNA(Sec) biosynthesis; L-seryl-tRNA(Sec) from L-serine and tRNA(Sec): step 1/1. In terms of biological role, catalyzes the attachment of serine to tRNA(Ser). Is also able to aminoacylate tRNA(Sec) with serine, to form the misacylated tRNA L-seryl-tRNA(Sec), which will be further converted into selenocysteinyl-tRNA(Sec). In Baumannia cicadellinicola subsp. Homalodisca coagulata, this protein is Serine--tRNA ligase.